We begin with the raw amino-acid sequence, 808 residues long: Tegument protein UL47 homolog (808 aa).

Disordered stretches follow at residues 1–21 and 77–266; these read MQMPSMHRYGHPGQNQRRENQ and PNEE…SFGE. The span at 83–92 shows a compositional bias: basic and acidic residues; sequence DNSRGRDRTR. Basic residues predominate over residues 133–160; that stretch reads SRARSRRRSSSRRRHRNASMHMHFRGGS. Residues 162–171 are compositionally biased toward polar residues; the sequence is RSATGSQNLI. A compositionally biased stretch (basic residues) spans 197-214; the sequence is RSSRVRRRHRRSSRRRGP. Over residues 235-259 the composition is skewed to basic and acidic residues; it reads PISDIDQKRLRKNSDTSSRGTRESP.

Belongs to the alphaherpesvirinae HHV-1 UL47 family. Interacts with US3 kinase. Interacts with UL31 and UL34; these interactions seem important for efficient virion nuclear egress. Interacts with UL41/VHS. Post-translationally, phosphorylated by US3. This phosphorylation is required for proper nuclear localization. In terms of processing, O-glycosylated.

Its subcellular location is the virion tegument. The protein resides in the host nucleus. The protein localises to the host cytoplasm. Its function is as follows. Tegument protein that can bind to various RNA transcripts. Plays a role in the attenuation of selective viral and cellular mRNA degradation by modulating the activity of host shutoff RNase UL41/VHS. Also plays a role in the primary envelopment of virions in the perinuclear space, probably by interacting with two nuclear egress proteins UL31 and UL34. Plays an important role in the splicing of glycoprotein/gC transcripts and thereby participates in bird-to-bird viral transmission. This Gallus gallus (Chicken) protein is Tegument protein UL47 homolog (MDV060).